Here is a 174-residue protein sequence, read N- to C-terminus: Phosphopantetheine adenylyltransferase (174 aa).

Thr10 contacts substrate. ATP-binding positions include 10-11 (TF) and His18. Residues Lys44, Leu76, and Arg90 each coordinate substrate. ATP contacts are provided by residues 91 to 93 (GLR), Glu101, and 126 to 132 (HAYISSS).

This sequence belongs to the bacterial CoaD family. In terms of assembly, homohexamer. Mg(2+) is required as a cofactor.

It localises to the cytoplasm. The catalysed reaction is (R)-4'-phosphopantetheine + ATP + H(+) = 3'-dephospho-CoA + diphosphate. Its pathway is cofactor biosynthesis; coenzyme A biosynthesis; CoA from (R)-pantothenate: step 4/5. Reversibly transfers an adenylyl group from ATP to 4'-phosphopantetheine, yielding dephospho-CoA (dPCoA) and pyrophosphate. This Alkalilimnicola ehrlichii (strain ATCC BAA-1101 / DSM 17681 / MLHE-1) protein is Phosphopantetheine adenylyltransferase.